A 577-amino-acid polypeptide reads, in one-letter code: External alternative NAD(P)H-ubiquinone oxidoreductase B1, mitochondrial (577 aa).

The transit peptide at 1–35 (MRGFTYLSKVLHSHSSYSKLLVLCSVSTGGLLVYA) directs the protein to the mitochondrion. 57–87 (RVVVLGTGWGGTSFLKDVDISSYDVQVVSPR) is an FAD binding site. Residue 221-257 (LHFVIVGGGPTGVEFAAELHDYVYEDLVKIYPSVKDF) coordinates NAD(+). The EF-hand domain occupies 378 to 413 (KVMEDISTIFEAADKDDSGTLSVEEFRDVLEDIIIR). Ca(2+) contacts are provided by D391, D393, S395, T397, and E402. The Microbody targeting signal motif lies at 568 to 577 (YIFGRDSSRI).

Belongs to the NADH dehydrogenase family. It depends on FAD as a cofactor.

The protein localises to the mitochondrion inner membrane. It is found in the peroxisome. It catalyses the reaction a quinone + NADH + H(+) = a quinol + NAD(+). The catalysed reaction is a ubiquinone + NADH + H(+) = a ubiquinol + NAD(+). Its activity is regulated as follows. Activity is calcium-dependent with a more pronounced effect at higher pH. Calcium-dependent NAD(P)H dehydrogenase. Binds calcium ions. Alternative NADH-ubiquinone oxidoreductase which catalyzes the oxidation of mitochondrial NADH does not translocate protons across the inner mitochondrial membrane. The protein is External alternative NAD(P)H-ubiquinone oxidoreductase B1, mitochondrial (NDB1) of Solanum tuberosum (Potato).